Reading from the N-terminus, the 457-residue chain is MQSSHRILSRLLHSPRKGYIRASVGGSVHFLALFDEKDNGFVDTTHRSFSSLIRSSSHVRGLISTNCLNKGLGVRCSVSLDRETPLIDTYSSHRNFFTRAKQVKRIEINDQHSQRAVTTALWCNFLVFSLKFGVWWTSSSHVIMAEVVHSVADFANQALLAYGLSSSRRAPDALHPYGYSKERFVWSLISAVGIFCLGSGATIVNGVQNLWTSSPPPNMELAAVVIGGSFLIEGASLLVAIQSVKKGAAQEGMTIRDYIWRGHDPTSVAVMTEDGAAVAGLAIAAASLVAVRMTGNPIYDPIGSIVVGNLLGMVAIFLIQRNRHALIGRAMDDQDMSKVLKFLRNDSVVDSLYDCKSEVIGPGSFRFKAEIDFNGQMVVQNYLKRTGREEWAKMFREAAKNGDDSAMLNIMSNYGEEVVTALGSEVDRLEKEIQELVPGIQHVDIEAHNPTPTDPSL.

The Cytoplasmic portion of the chain corresponds to 1–115 (MQSSHRILSR…IEINDQHSQR (115 aa)). A helical membrane pass occupies residues 116–136 (AVTTALWCNFLVFSLKFGVWW). At 137 to 141 (TSSSH) the chain is on the vacuolar side. A helical transmembrane segment spans residues 142–162 (VIMAEVVHSVADFANQALLAY). At 163-183 (GLSSSRRAPDALHPYGYSKER) the chain is on the cytoplasmic side. A helical membrane pass occupies residues 184-204 (FVWSLISAVGIFCLGSGATIV). Over 205-220 (NGVQNLWTSSPPPNME) the chain is Vacuolar. A helical transmembrane segment spans residues 221 to 241 (LAAVVIGGSFLIEGASLLVAI). Residues 242–267 (QSVKKGAAQEGMTIRDYIWRGHDPTS) lie on the Cytoplasmic side of the membrane. Residues 268 to 288 (VAVMTEDGAAVAGLAIAAASL) form a helical membrane-spanning segment. Residues 289–297 (VAVRMTGNP) lie on the Vacuolar side of the membrane. Residues 298 to 318 (IYDPIGSIVVGNLLGMVAIFL) form a helical membrane-spanning segment. The Cytoplasmic portion of the chain corresponds to 319–457 (IQRNRHALIG…HNPTPTDPSL (139 aa)).

The protein belongs to the cation diffusion facilitator (CDF) transporter (TC 2.A.4) family.

The protein resides in the vacuole membrane. In terms of biological role, involved in sequestration of excess metal in the cytoplasm into vacuoles to maintain metal homeostasis. This is Metal tolerance protein C4 (MTPC4) from Arabidopsis thaliana (Mouse-ear cress).